Consider the following 204-residue polypeptide: Outer-membrane lipoprotein carrier protein (204 aa).

The N-terminal stretch at 1 to 21 (MKKLLVACCVVSGMMSASVLA) is a signal peptide.

Belongs to the LolA family. In terms of assembly, monomer.

The protein localises to the periplasm. Its function is as follows. Participates in the translocation of lipoproteins from the inner membrane to the outer membrane. Only forms a complex with a lipoprotein if the residue after the N-terminal Cys is not an aspartate (The Asp acts as a targeting signal to indicate that the lipoprotein should stay in the inner membrane). The sequence is that of Outer-membrane lipoprotein carrier protein from Edwardsiella ictaluri (strain 93-146).